Here is a 711-residue protein sequence, read N- to C-terminus: MLNFFAAAPRGYEYALSLELADLGASEIKESVAGVYFSASLELGYRITLWSRIASRIILVIHKGPCESPEQLYNAAYGIDWQMEFNHRSTFSIDFHGMGGFINNTMFGALKIKDAIVDRFRDDDCPRPDVARVDADFRIDAHYRRGQITIGLNFSGPALHKRGYRSTTGEAPLKENLAANMLVRSGWQKTPVTLMDPFCGSGTILIEAAMIACDMAPGLHRERFGFEHWHRHNDKVWQGLLDEAKARASIGKTRCTTKFYGSDIDSRLVALAKRNAENAGVLDLIEFDVSNALNVKVPGESGYLISNPPYGERLGTVTALLQLYYQLGDKFKAEFGGWNLAILNSDVELLSALKLKADKQMKMNNGALECAFNLYTVHAENTRRVDPSKINRDGDVSDIAVPFANRVKKNFKQLQKWAKKEGVDSYRIYDADLPDYKVAIDKYLDYVVIQEYTAPVDIPESVTKRRLTDVLITLPSAIGIDPENIILKTRERQKGTNQYEKIQANKLELITTEYGAKFKLNLKEYLDTGLFLDHRLTRKLVGQKSKDKDVLNLFAYTGTASVHAALGGAKSVKTVDMSNTYTNWAKENFALNGLNDDKYQFVQANCMQWIKTTHDKFDLIFIDPPTFSNSKRMEDSFDVLRDHVALLSSLIKLLNPGGEIIFSNNKRKFKMEIEALEALNFTVKNIDNQTLPLDFKRNPQIHNTWLLTHAE.

Positions 43 to 154 (LGYRITLWSR…RGQITIGLNF (112 aa)) constitute a THUMP domain.

The protein belongs to the methyltransferase superfamily. RlmKL family.

It is found in the cytoplasm. It carries out the reaction guanosine(2445) in 23S rRNA + S-adenosyl-L-methionine = N(2)-methylguanosine(2445) in 23S rRNA + S-adenosyl-L-homocysteine + H(+). It catalyses the reaction guanosine(2069) in 23S rRNA + S-adenosyl-L-methionine = N(2)-methylguanosine(2069) in 23S rRNA + S-adenosyl-L-homocysteine + H(+). In terms of biological role, specifically methylates the guanine in position 2445 (m2G2445) and the guanine in position 2069 (m7G2069) of 23S rRNA. The sequence is that of Ribosomal RNA large subunit methyltransferase K/L from Shewanella sediminis (strain HAW-EB3).